The sequence spans 153 residues: MMTGELILVGLIVIGLIGRSPIIATAACVLLAVKLLHLSRFLPSIERRGLELGLLFLTLSVLVPFASGKVQMKELIAAFNTWPGWLALIGGAVAAYMNAKGLDLLKLDPQMVVGLVIGSIFGIIFLRGIPVGPLMAAGITAILYKLFKLMSGG.

A run of 5 helical transmembrane segments spans residues 6–26 (LILVGLIVIGLIGRSPIIATA), 50–70 (LELGLLFLTLSVLVPFASGKV), 75–95 (LIAAFNTWPGWLALIGGAVAA), 111–131 (MVVGLVIGSIFGIIFLRGIPV), and 132–152 (GPLMAAGITAILYKLFKLMSG).

The protein belongs to the UPF0756 family.

The protein localises to the cell membrane. This chain is UPF0756 membrane protein Pjdr2_2290, found in Paenibacillus sp. (strain JDR-2).